Here is a 104-residue protein sequence, read N- to C-terminus: MTNRLTLSGTVCRAPLRKVSPSGIPHCQFVLEHRSVQEEAGFHRQAWCQMPVIVSGHENQAITHSITVGSRITVQGFISCHKAKNGLSKMVLHAEQIELIDSGD.

In terms of domain architecture, SSB spans Met-1–Asp-101.

Belongs to the PriB family. As to quaternary structure, homodimer. Interacts with PriA and DnaT. Component of the replication restart primosome. Primosome assembly occurs via a 'hand-off' mechanism. PriA binds to replication forks, subsequently PriB then DnaT bind; DnaT then displaces ssDNA to generate the helicase loading substrate.

Its function is as follows. Involved in the restart of stalled replication forks, which reloads the replicative helicase on sites other than the origin of replication; the PriA-PriB pathway is the major replication restart pathway. During primosome assembly it facilitates complex formation between PriA and DnaT on DNA; stabilizes PriA on DNA. Stimulates the DNA unwinding activity of PriA helicase. In Salmonella typhi, this protein is Replication restart protein PriB.